Consider the following 201-residue polypeptide: Potassium-transporting ATPase KdpC subunit (201 aa).

The chain crosses the membrane as a helical span at residues proline 7–methionine 27.

This sequence belongs to the KdpC family. The system is composed of three essential subunits: KdpA, KdpB and KdpC.

The protein resides in the cell inner membrane. Its function is as follows. Part of the high-affinity ATP-driven potassium transport (or Kdp) system, which catalyzes the hydrolysis of ATP coupled with the electrogenic transport of potassium into the cytoplasm. This subunit acts as a catalytic chaperone that increases the ATP-binding affinity of the ATP-hydrolyzing subunit KdpB by the formation of a transient KdpB/KdpC/ATP ternary complex. This Bradyrhizobium diazoefficiens (strain JCM 10833 / BCRC 13528 / IAM 13628 / NBRC 14792 / USDA 110) protein is Potassium-transporting ATPase KdpC subunit.